Here is a 116-residue protein sequence, read N- to C-terminus: U16-barytoxin-Tl1b (116 aa).

Positions 1–20 (MKTIIVFLSLLVLATKFGDA) are cleaved as a signal peptide. Residues 21–74 (KEGVNQKQKKEVTQNEFREEYLNEMAAMSLVQQLEAIERALFENEAGRNSRQKR) constitute a propeptide that is removed on maturation. 3 disulfide bridges follow: C75-C90, C82-C95, and C89-C110.

It belongs to the neurotoxin 14 (magi-1) family. 06 (ICK-Trit) subfamily. As to expression, expressed by the venom gland.

The protein resides in the secreted. In terms of biological role, ion channel inhibitor. The sequence is that of U16-barytoxin-Tl1b from Trittame loki (Brush-footed trapdoor spider).